The following is an 88-amino-acid chain: Small ribosomal subunit protein uS17c (88 aa).

It belongs to the universal ribosomal protein uS17 family. Part of the 30S ribosomal subunit.

Its subcellular location is the plastid. The protein localises to the cyanelle. In terms of biological role, one of the primary rRNA binding proteins, it binds specifically to the 5'-end of 16S ribosomal RNA. The polypeptide is Small ribosomal subunit protein uS17c (rps17) (Cyanophora paradoxa).